We begin with the raw amino-acid sequence, 394 residues long: Elongation factor Tu (394 aa).

The tr-type G domain maps to K10 to K204. The interval G19–T26 is G1. GTP is bound at residue G19–T26. T26 provides a ligand contact to Mg(2+). The tract at residues G60–N64 is G2. The interval D81 to G84 is G3. Residues D81 to H85 and N136 to D139 each bind GTP. The interval N136–D139 is G4. Residues S174 to L176 form a G5 region.

This sequence belongs to the TRAFAC class translation factor GTPase superfamily. Classic translation factor GTPase family. EF-Tu/EF-1A subfamily. Monomer.

It localises to the cytoplasm. It carries out the reaction GTP + H2O = GDP + phosphate + H(+). Functionally, GTP hydrolase that promotes the GTP-dependent binding of aminoacyl-tRNA to the A-site of ribosomes during protein biosynthesis. The chain is Elongation factor Tu from Buchnera aphidicola subsp. Baizongia pistaciae (strain Bp).